The primary structure comprises 96 residues: Co-chaperonin GroES (96 aa).

Belongs to the GroES chaperonin family. In terms of assembly, heptamer of 7 subunits arranged in a ring. Interacts with the chaperonin GroEL.

It localises to the cytoplasm. Together with the chaperonin GroEL, plays an essential role in assisting protein folding. The GroEL-GroES system forms a nano-cage that allows encapsulation of the non-native substrate proteins and provides a physical environment optimized to promote and accelerate protein folding. GroES binds to the apical surface of the GroEL ring, thereby capping the opening of the GroEL channel. The protein is Co-chaperonin GroES of Wolbachia pipientis wMel.